A 356-amino-acid polypeptide reads, in one-letter code: MSKEPIIKLDNIDVTFHQKKREINAVKDVTIHINQGDIYGIVGYSGAGKSTLVRVINLLQEPSAGKITIDNQVIYDNKVTLTSTQLREQRREIGMIFQHFNLMSQLTAEQNVAFALKHSGLSKEAKAAKVAKLLELVGLSDRAQNYPSQLSGGQKQRVAIARALANDPKILISDESTSALDPKTTKQILALLQDLNKKLGLTIVLITHEMQIVKDIANRVAVMQNGKLIEEGSVLDIFSHPRESLTQDFIKIATGIDEAMLKIEQQEVVKNLPVGSKLVQLKYAGHSTDEPLLNQIYKEFEVTANILYGNIEILDGIPVGEMVVILSGDEEKLRQACQAITDSQVQLTLLKEGGKA.

Positions 7–250 constitute an ABC transporter domain; that stretch reads IKLDNIDVTF…PRESLTQDFI (244 aa). Residue 43–50 coordinates ATP; that stretch reads GYSGAGKS.

Belongs to the ABC transporter superfamily. Methionine importer (TC 3.A.1.24) family. As to quaternary structure, the complex is composed of two ATP-binding proteins (MetN), two transmembrane proteins (MetI) and a solute-binding protein (MetQ).

It is found in the cell membrane. The enzyme catalyses L-methionine(out) + ATP + H2O = L-methionine(in) + ADP + phosphate + H(+). The catalysed reaction is D-methionine(out) + ATP + H2O = D-methionine(in) + ADP + phosphate + H(+). Its function is as follows. Part of the ABC transporter complex MetNIQ involved in methionine import. Responsible for energy coupling to the transport system. In Streptococcus agalactiae serotype III (strain NEM316), this protein is Methionine import ATP-binding protein MetN.